An 89-amino-acid polypeptide reads, in one-letter code: UPF0297 protein OB2008 (89 aa).

It belongs to the UPF0297 family.

This Oceanobacillus iheyensis (strain DSM 14371 / CIP 107618 / JCM 11309 / KCTC 3954 / HTE831) protein is UPF0297 protein OB2008.